The chain runs to 417 residues: MSAEQDKEPIALKRVRGGDSGLDGLGGPNIQLGSPDKKKRKANTQGSSFPPLSEYAPPPNPNSDHLVAANPFDDSYNTISYKPLPSSNPYLGPGYPGFGGYSTFRMPPHVPPRMSSPYCGPYSLRNQPHPFPQNPLGMGFNRPHAFNFGPHDNSNFGNPPYNNVLTQDINMPGQHFRQGSAENFSQIPPQNVGQVSNPDLASNFAPGNNSNFTSPLETNHSFIPPPNAFGQAKAPLPKQDFTQGATKTPNQNSSTHPPHLNMEDPVNQSNVELKNVNRNNVVQENSRSGSAEATNNHANGTQNKPRQPRGAADLCTPDKSRKFSLLPSRHGHSSSDPVYPCGICTNEVNDDQDAILCEASCQKWFHRICTGMTETAYGLLTAEASAVWGCDTCMADKDVQLMRTREAFGPPAVGGDA.

Over residues 1–11 (MSAEQDKEPIA) the composition is skewed to basic and acidic residues. 3 disordered regions span residues 1–71 (MSAE…AANP), 175–265 (HFRQ…MEDP), and 284–318 (ENSR…CTPD). Residues 18 to 27 (GDSGLDGLGG) show a composition bias toward gly residues. The short motif at 35-41 (PDKKKRK) is the Nuclear localization signal element. Composition is skewed to polar residues over residues 180 to 221 (SAEN…TNHS), 240 to 256 (DFTQ…SSTH), and 284 to 305 (ENSR…QNKP). The segment at 338 to 396 (VYPCGICTNEVNDDQDAILCEASCQKWFHRICTGMTETAYGLLTAEASAVWGCDTCMAD) adopts a PHD-type zinc-finger fold. Residues 339 to 386 (YPCGICTNEVNDDQDAILCEASCQKWFHRICTGMTETAYGLLTAEASA) are interaction with H3K4me2. The interval 371–389 (GMTETAYGLLTAEASAVWG) is interaction with BCL9.

Interacts with BCL9 via The PHD-type zinc finger motiv, and thereby becomes part of the nuclear beta-catenin/TCF complex. Found in a complex with BCL9L, CDC73, CTNNB1 and PYGO1. Interacts with histone H3 mono-, di- or tri-methylated at 'Lys4' (H3K4me1, H3K4me2, H3K4me3); the interaction is enhanced by the interaction with BCL9.

The protein resides in the nucleus. Involved in signal transduction through the Wnt pathway. The protein is Pygopus homolog 1 (Pygo1) of Mus musculus (Mouse).